The primary structure comprises 280 residues: Tryptophan 2,3-dioxygenase (280 aa).

Substrate is bound by residues 47–51 (FVVQH), Tyr109, and Arg113. Heme is bound at residue His236. Thr250 lines the substrate pocket.

The protein belongs to the tryptophan 2,3-dioxygenase family. As to quaternary structure, homotetramer. The cofactor is heme.

It carries out the reaction L-tryptophan + O2 = N-formyl-L-kynurenine. Its pathway is amino-acid degradation; L-tryptophan degradation via kynurenine pathway; L-kynurenine from L-tryptophan: step 1/2. In terms of biological role, heme-dependent dioxygenase that catalyzes the oxidative cleavage of the L-tryptophan (L-Trp) pyrrole ring and converts L-tryptophan to N-formyl-L-kynurenine. Catalyzes the oxidative cleavage of the indole moiety. The protein is Tryptophan 2,3-dioxygenase of Serratia proteamaculans (strain 568).